An 89-amino-acid chain; its full sequence is Elongation factor 1-beta (89 aa).

This sequence belongs to the EF-1-beta/EF-1-delta family.

Promotes the exchange of GDP for GTP in EF-1-alpha/GDP, thus allowing the regeneration of EF-1-alpha/GTP that could then be used to form the ternary complex EF-1-alpha/GTP/AAtRNA. The protein is Elongation factor 1-beta (ef1b) of Methanothermobacter thermautotrophicus (strain ATCC 29096 / DSM 1053 / JCM 10044 / NBRC 100330 / Delta H) (Methanobacterium thermoautotrophicum).